Here is a 358-residue protein sequence, read N- to C-terminus: Chorismate synthase (358 aa).

The NADP(+) site is built by R46 and R52. Residues 123-125, 239-240, G283, 298-302, and R324 each bind FMN; these read RSS, NA, and KSVAT.

Belongs to the chorismate synthase family. In terms of assembly, homotetramer. The cofactor is FMNH2.

The catalysed reaction is 5-O-(1-carboxyvinyl)-3-phosphoshikimate = chorismate + phosphate. It functions in the pathway metabolic intermediate biosynthesis; chorismate biosynthesis; chorismate from D-erythrose 4-phosphate and phosphoenolpyruvate: step 7/7. Its function is as follows. Catalyzes the anti-1,4-elimination of the C-3 phosphate and the C-6 proR hydrogen from 5-enolpyruvylshikimate-3-phosphate (EPSP) to yield chorismate, which is the branch point compound that serves as the starting substrate for the three terminal pathways of aromatic amino acid biosynthesis. This reaction introduces a second double bond into the aromatic ring system. This chain is Chorismate synthase, found in Parabacteroides distasonis (strain ATCC 8503 / DSM 20701 / CIP 104284 / JCM 5825 / NCTC 11152).